A 335-amino-acid chain; its full sequence is HTH-type transcriptional regulator LacR (335 aa).

One can recognise an HTH lacI-type domain in the interval 1-58; it reads MRTIKEIALESGYSPATVSRLLNNDPNLSITADTKNKILEIANKLGYWEDHQEKKIKP. The H-T-H motif DNA-binding region spans 4-23; sequence IKEIALESGYSPATVSRLLN.

It participates in carbohydrate metabolism; lactose degradation [regulation]. Its function is as follows. Negatively regulates the transcription of the lactose utilization genes lacL and lacM. The chain is HTH-type transcriptional regulator LacR (lacR) from Lactobacillus helveticus (Lactobacillus suntoryeus).